Here is a 375-residue protein sequence, read N- to C-terminus: 4-hydroxy-3-methylbut-2-en-1-yl diphosphate synthase (flavodoxin) (375 aa).

[4Fe-4S] cluster is bound by residues C270, C273, C305, and E312.

The protein belongs to the IspG family. It depends on [4Fe-4S] cluster as a cofactor.

The enzyme catalyses (2E)-4-hydroxy-3-methylbut-2-enyl diphosphate + oxidized [flavodoxin] + H2O + 2 H(+) = 2-C-methyl-D-erythritol 2,4-cyclic diphosphate + reduced [flavodoxin]. It functions in the pathway isoprenoid biosynthesis; isopentenyl diphosphate biosynthesis via DXP pathway; isopentenyl diphosphate from 1-deoxy-D-xylulose 5-phosphate: step 5/6. Its function is as follows. Converts 2C-methyl-D-erythritol 2,4-cyclodiphosphate (ME-2,4cPP) into 1-hydroxy-2-methyl-2-(E)-butenyl 4-diphosphate. The polypeptide is 4-hydroxy-3-methylbut-2-en-1-yl diphosphate synthase (flavodoxin) (Shigella flexneri serotype 5b (strain 8401)).